The sequence spans 338 residues: Lipoate-protein ligase A (338 aa).

The 188-residue stretch at 29–216 (PATQRVLFLW…AFFAHYGERV (188 aa)) folds into the BPL/LPL catalytic domain. ATP-binding positions include R71, 76-79 (GAVF), and K134. K134 is a binding site for (R)-lipoate.

This sequence belongs to the LplA family. Monomer.

Its subcellular location is the cytoplasm. The catalysed reaction is L-lysyl-[lipoyl-carrier protein] + (R)-lipoate + ATP = N(6)-[(R)-lipoyl]-L-lysyl-[lipoyl-carrier protein] + AMP + diphosphate + H(+). Its pathway is protein modification; protein lipoylation via exogenous pathway; protein N(6)-(lipoyl)lysine from lipoate: step 1/2. It functions in the pathway protein modification; protein lipoylation via exogenous pathway; protein N(6)-(lipoyl)lysine from lipoate: step 2/2. Its function is as follows. Catalyzes both the ATP-dependent activation of exogenously supplied lipoate to lipoyl-AMP and the transfer of the activated lipoyl onto the lipoyl domains of lipoate-dependent enzymes. This Salmonella choleraesuis (strain SC-B67) protein is Lipoate-protein ligase A.